The sequence spans 170 residues: Shikimate kinase (170 aa).

Residue 11–16 (LSGKST) coordinates ATP. Ser15 is a Mg(2+) binding site. Substrate contacts are provided by Asp33, Arg57, and Gly79. Arg119 is a binding site for ATP. Arg137 is a binding site for substrate.

Belongs to the shikimate kinase family. In terms of assembly, monomer. It depends on Mg(2+) as a cofactor.

Its subcellular location is the cytoplasm. The enzyme catalyses shikimate + ATP = 3-phosphoshikimate + ADP + H(+). It functions in the pathway metabolic intermediate biosynthesis; chorismate biosynthesis; chorismate from D-erythrose 4-phosphate and phosphoenolpyruvate: step 5/7. In terms of biological role, catalyzes the specific phosphorylation of the 3-hydroxyl group of shikimic acid using ATP as a cosubstrate. The sequence is that of Shikimate kinase from Clostridium botulinum (strain Okra / Type B1).